We begin with the raw amino-acid sequence, 334 residues long: Protein translocase subunit SecF (334 aa).

Helical transmembrane passes span 18-38, 144-164, 168-190, 195-217, 258-278, and 279-299; these read VAAG…AVTG, GAAM…AIRF, FGLA…IKIF, SLTV…IIIF, ATLA…WVMA, and FGVV…LLWI.

The protein belongs to the SecD/SecF family. SecF subfamily. As to quaternary structure, forms a complex with SecD. Part of the essential Sec protein translocation apparatus which comprises SecA, SecYEG and auxiliary proteins SecDF. Other proteins may also be involved.

It localises to the cell inner membrane. In terms of biological role, part of the Sec protein translocase complex. Interacts with the SecYEG preprotein conducting channel. SecDF uses the proton motive force (PMF) to complete protein translocation after the ATP-dependent function of SecA. The sequence is that of Protein translocase subunit SecF from Gemmatimonas aurantiaca (strain DSM 14586 / JCM 11422 / NBRC 100505 / T-27).